Reading from the N-terminus, the 431-residue chain is MQLNSNGWHVDDHIVVAVSTGIDSMCLLYQLLNDYKDSYRKLTCLHVNHGVRSASIEEARFLEAYCERHHIDLHIKKLDLSHSLNRNNSIQNEARIKRYEWFDEMMNVLEADVLLTAHHLDDQLETIMYRIFNGKSTRNKLGFDELSKRNGYQIYRPLLAVSKKEIKQFQERYHIPYFEDESNKDNKYVRNDIRNRIIPAIDENNQLKVSHLLKLKQWHDEQYDILQYSAKQFIQEFVKFDEQSKYLEVSRQAFNNLPNSLKMVVLDCLLSKYYELFNISAKTYEEWFKQFSSKKAQFSINLTDKWIIQIAYGKLIIMAKNNGDTYFRVQTIEKPGNYIFNKYRLEIHSNLPKCLFPLTVRTRQSGDTFKLNGRDGYKKVNRLFIDCKVQQWVRDQMPIVLDKQQRIIAVGDLYQQQTIKQWIIISKNGDE.

Position 19–24 (19–24) interacts with ATP; sequence STGIDS.

The protein belongs to the tRNA(Ile)-lysidine synthase family.

The protein resides in the cytoplasm. It carries out the reaction cytidine(34) in tRNA(Ile2) + L-lysine + ATP = lysidine(34) in tRNA(Ile2) + AMP + diphosphate + H(+). Its function is as follows. Ligates lysine onto the cytidine present at position 34 of the AUA codon-specific tRNA(Ile) that contains the anticodon CAU, in an ATP-dependent manner. Cytidine is converted to lysidine, thus changing the amino acid specificity of the tRNA from methionine to isoleucine. The protein is tRNA(Ile)-lysidine synthase of Staphylococcus aureus (strain MRSA252).